The primary structure comprises 508 residues: Maturase K (508 aa).

Belongs to the intron maturase 2 family. MatK subfamily.

It localises to the plastid. The protein resides in the chloroplast. In terms of biological role, usually encoded in the trnK tRNA gene intron. Probably assists in splicing its own and other chloroplast group II introns. The chain is Maturase K from Antirrhinum majus (Garden snapdragon).